The sequence spans 434 residues: Salicylate hydroxylase (434 aa).

Residue 9–38 (RIGIVGGGISGVALALELCRYSHIQVQLFE) coordinates FAD.

In terms of assembly, monomer. FAD serves as cofactor.

The catalysed reaction is salicylate + NADH + O2 + 2 H(+) = catechol + CO2 + NAD(+) + H2O. It functions in the pathway aromatic compound metabolism; naphthalene degradation. The polypeptide is Salicylate hydroxylase (nahG) (Pseudomonas putida (Arthrobacter siderocapsulatus)).